We begin with the raw amino-acid sequence, 896 residues long: Translation initiation factor IF-2 (896 aa).

Residues 49-310 form a disordered region; the sequence is LKKEHGDTSG…MQQGFDKSAT (262 aa). Residues 57–66 are compositionally biased toward polar residues; sequence SGETEPTRLT. 3 stretches are compositionally biased toward basic and acidic residues: residues 101–174, 184–240, and 250–263; these read STIE…KDMN, AKKE…KSAD, and REAE…DEKA. Residues 284-295 show a composition bias toward basic residues; it reads RNQRGRGGKGKL. The 170-residue stretch at 395–564 folds into the tr-type G domain; sequence GRAPVVTIMG…LLQSEVLELT (170 aa). The tract at residues 404–411 is G1; the sequence is GHVDHGKT. 404–411 provides a ligand contact to GTP; the sequence is GHVDHGKT. Residues 429 to 433 are G2; the sequence is GITQH. Residues 450–453 form a G3 region; the sequence is DTPG. GTP-binding positions include 450–454 and 504–507; these read DTPGH and NKID. Positions 504–507 are G4; sequence NKID. The tract at residues 540-542 is G5; that stretch reads SAK.

The protein belongs to the TRAFAC class translation factor GTPase superfamily. Classic translation factor GTPase family. IF-2 subfamily.

Its subcellular location is the cytoplasm. Its function is as follows. One of the essential components for the initiation of protein synthesis. Protects formylmethionyl-tRNA from spontaneous hydrolysis and promotes its binding to the 30S ribosomal subunits. Also involved in the hydrolysis of GTP during the formation of the 70S ribosomal complex. This is Translation initiation factor IF-2 from Vibrio atlanticus (strain LGP32) (Vibrio splendidus (strain Mel32)).